Consider the following 341-residue polypeptide: Cell division protein FtsX (341 aa).

The tract at residues 1–34 (MSTTRTPKVSERVAPKPADPQPAKKKRGEDDDGP) is disordered. Residues 1–65 (MSTTRTPKVS…RRLGKQPIGS (65 aa)) are Cytoplasmic-facing. Residues 66-86 (FFTCLVMAVALSMPMGLSLLL) form a helical membrane-spanning segment. Topologically, residues 87–212 (KNIEQLGGSW…LAAILKLGDR (126 aa)) are periplasmic. A helical transmembrane segment spans residues 213–233 (FVFGLAVMLISALLLVIGNTI). At 234–263 (RLHIENRRIEIEVIKLVGGTDAYVRRPFLY) the chain is on the cytoplasmic side. The chain crosses the membrane as a helical span at residues 264-284 (MGALYGLGAGLLAWGILAFGL). Residues 285-311 (NWLNEAVVGLSGLYGSDFALGGVPASD) are Periplasmic-facing. Residues 312–332 (GLSLLIGAVLLGYIGAWIAVA) traverse the membrane as a helical segment. Over 333-341 (RHLNELAPR) the chain is Cytoplasmic.

The protein belongs to the ABC-4 integral membrane protein family. FtsX subfamily. Forms a membrane-associated complex with FtsE.

It is found in the cell inner membrane. Part of the ABC transporter FtsEX involved in cellular division. The chain is Cell division protein FtsX from Pseudomonas putida (Arthrobacter siderocapsulatus).